The sequence spans 293 residues: MEENLKGLYAALLVPFDENGQVKEEGLKAIAKNAIENEELDGLYVNGSSGENFLINTEQKKQIFKIAKEAVGDDVKMIAQIGSLDLNEAIELGKYATELGYDALSAVTPFYYPLSFEEIKQYYFDLIEATQNKMIIYSIPDLTGVNIDVDQFGELFNHEKIIGVKYTAPNFFLLERLRKAYPDKLIFSGFDEMLIQAVISGVDGAIGSTYNVNGKRSRQIFELAQQGKVDEAYQVQHETNDIIAKILELGLYPTLKEILKYRGIDSGLPKRPFAPFNEENRAALDELVNKYNL.

2 residues coordinate aceneuramate: Ser-48 and Ser-49. Residue Tyr-137 is the Proton donor of the active site. Lys-165 acts as the Schiff-base intermediate with substrate in catalysis. Aceneuramate is bound by residues Thr-167, Gly-189, Asp-191, Glu-192, and Ser-208.

The protein belongs to the DapA family. NanA subfamily. Homotetramer.

Its subcellular location is the cytoplasm. The enzyme catalyses aceneuramate = aldehydo-N-acetyl-D-mannosamine + pyruvate. It participates in amino-sugar metabolism; N-acetylneuraminate degradation; D-fructose 6-phosphate from N-acetylneuraminate: step 1/5. Functionally, catalyzes the reversible aldol cleavage of N-acetylneuraminic acid (sialic acid; Neu5Ac) to form pyruvate and N-acetylmannosamine (ManNAc) via a Schiff base intermediate. The sequence is that of N-acetylneuraminate lyase from Staphylococcus carnosus (strain TM300).